The following is a 291-amino-acid chain: Malectin (291 aa).

A signal peptide spans 1–30 (MLRPRGAEGTAVALLRLLLLLLLLGPKLRG). At 31–268 (PGLGVVGAAG…TPNPYASDNS (238 aa)) the chain is on the lumenal side. 5 residues coordinate a carbohydrate: Tyr81, Tyr103, Tyr130, Phe131, and Asp200. Residues 220–264 (LQPHPGLEKKEEEEEEEEYDEGSNLKRQTNKNRVQSGPRTPNPYA) are disordered. The span at 230-240 (EEEEEEEEYDE) shows a compositional bias: acidic residues. A compositionally biased stretch (polar residues) spans 244–264 (LKRQTNKNRVQSGPRTPNPYA). Asn267 carries N-linked (GlcNAc...) asparagine glycosylation. A helical membrane pass occupies residues 269 to 289 (SLMFPILVAFGVFIPTLFCLC). Topologically, residues 290-291 (RL) are cytoplasmic.

Belongs to the malectin family. As to quaternary structure, interacts with the oligosaccharyltransferase (OST) complex.

The protein resides in the endoplasmic reticulum membrane. In terms of biological role, carbohydrate-binding protein with a strong ligand preference for Glc2-N-glycan. May play a role in the early steps of protein N-glycosylation. The protein is Malectin of Mus musculus (Mouse).